The chain runs to 681 residues: Ribosomal L1 domain-containing protein CG13096 (681 aa).

Disordered regions lie at residues 1-248 (MVKV…AKSK) and 579-681 (DAAP…DDEE). 2 positions are modified to phosphoserine: Ser15 and Ser17. A compositionally biased stretch (basic and acidic residues) spans 54–74 (VKKDAIKKEPEVSKKGAEKKQ). A Phosphoserine modification is found at Ser89. Over residues 103 to 112 (KPAASGAPVG) the composition is skewed to low complexity. A Phosphoserine modification is found at Ser128. Residues 189-217 (QAAPAKPAKAQPASQLQKKAKAVQKLSKP) show a composition bias toward low complexity. A compositionally biased stretch (basic and acidic residues) spans 599–610 (KESSSEGAKADA). The span at 611–681 (ESDEEEEVEE…EDDDDDDDEE (71 aa)) shows a compositional bias: acidic residues.

This sequence belongs to the universal ribosomal protein uL1 family. Highly divergent.

In Drosophila melanogaster (Fruit fly), this protein is Ribosomal L1 domain-containing protein CG13096.